The following is a 229-amino-acid chain: Cytidylate kinase (229 aa).

Residue 12 to 20 coordinates ATP; it reads GPSGSGKGT.

Belongs to the cytidylate kinase family. Type 1 subfamily.

Its subcellular location is the cytoplasm. The catalysed reaction is CMP + ATP = CDP + ADP. It carries out the reaction dCMP + ATP = dCDP + ADP. The protein is Cytidylate kinase of Stutzerimonas stutzeri (strain A1501) (Pseudomonas stutzeri).